A 298-amino-acid polypeptide reads, in one-letter code: HTH-type transcriptional regulator CzcR (298 aa).

Positions 11–68 (MELRDLQIFQSVADQGSVSSAAKELNYVQSNVTARIKQLENELKTPLFYRHKRGMTLT) constitute an HTH lysR-type domain. Positions 28–47 (VSSAAKELNYVQSNVTARIK) form a DNA-binding region, H-T-H motif.

The protein belongs to the LysR transcriptional regulatory family.

This is HTH-type transcriptional regulator CzcR (czcR) from Bacillus thuringiensis (strain Al Hakam).